The primary structure comprises 269 residues: Regulatory protein RecX (269 aa).

This sequence belongs to the RecX family.

The protein localises to the cytoplasm. Its function is as follows. Modulates RecA activity. The chain is Regulatory protein RecX from Listeria welshimeri serovar 6b (strain ATCC 35897 / DSM 20650 / CCUG 15529 / CIP 8149 / NCTC 11857 / SLCC 5334 / V8).